The following is a 396-amino-acid chain: Tryptophan synthase beta chain (396 aa).

An N6-(pyridoxal phosphate)lysine modification is found at Lys-86.

This sequence belongs to the TrpB family. Tetramer of two alpha and two beta chains. Requires pyridoxal 5'-phosphate as cofactor.

The enzyme catalyses (1S,2R)-1-C-(indol-3-yl)glycerol 3-phosphate + L-serine = D-glyceraldehyde 3-phosphate + L-tryptophan + H2O. It functions in the pathway amino-acid biosynthesis; L-tryptophan biosynthesis; L-tryptophan from chorismate: step 5/5. Functionally, the beta subunit is responsible for the synthesis of L-tryptophan from indole and L-serine. The sequence is that of Tryptophan synthase beta chain from Photobacterium profundum (strain SS9).